The following is a 350-amino-acid chain: 4-hydroxythreonine-4-phosphate dehydrogenase (350 aa).

Substrate contacts are provided by His138 and Thr139. Residues His173, His218, and His273 each contribute to the a divalent metal cation site. Positions 281, 290, and 299 each coordinate substrate.

This sequence belongs to the PdxA family. Homodimer. The cofactor is Zn(2+). Requires Mg(2+) as cofactor. Co(2+) is required as a cofactor.

It localises to the cytoplasm. It catalyses the reaction 4-(phosphooxy)-L-threonine + NAD(+) = 3-amino-2-oxopropyl phosphate + CO2 + NADH. It participates in cofactor biosynthesis; pyridoxine 5'-phosphate biosynthesis; pyridoxine 5'-phosphate from D-erythrose 4-phosphate: step 4/5. Functionally, catalyzes the NAD(P)-dependent oxidation of 4-(phosphooxy)-L-threonine (HTP) into 2-amino-3-oxo-4-(phosphooxy)butyric acid which spontaneously decarboxylates to form 3-amino-2-oxopropyl phosphate (AHAP). In Xanthobacter autotrophicus (strain ATCC BAA-1158 / Py2), this protein is 4-hydroxythreonine-4-phosphate dehydrogenase.